Here is a 150-residue protein sequence, read N- to C-terminus: Ribosome maturation factor RimP (150 aa).

Belongs to the RimP family.

It localises to the cytoplasm. Functionally, required for maturation of 30S ribosomal subunits. This is Ribosome maturation factor RimP from Francisella tularensis subsp. holarctica (strain LVS).